The chain runs to 466 residues: Asparagine--tRNA ligase (466 aa).

The protein belongs to the class-II aminoacyl-tRNA synthetase family. In terms of assembly, homodimer.

Its subcellular location is the cytoplasm. It carries out the reaction tRNA(Asn) + L-asparagine + ATP = L-asparaginyl-tRNA(Asn) + AMP + diphosphate + H(+). This is Asparagine--tRNA ligase from Shewanella putrefaciens (strain CN-32 / ATCC BAA-453).